Here is a 384-residue protein sequence, read N- to C-terminus: Cysteine desulfurase (384 aa).

Residues 74–75, asparagine 154, glutamine 180, and 200–202 each bind pyridoxal 5'-phosphate; these read GT and SGH. Lysine 203 is subject to N6-(pyridoxal phosphate)lysine. Threonine 238 is a binding site for pyridoxal 5'-phosphate. The active-site Cysteine persulfide intermediate is cysteine 325. Position 325 (cysteine 325) interacts with [2Fe-2S] cluster.

The protein belongs to the class-V pyridoxal-phosphate-dependent aminotransferase family. NifS/IscS subfamily. As to quaternary structure, homodimer. It depends on pyridoxal 5'-phosphate as a cofactor.

The enzyme catalyses (sulfur carrier)-H + L-cysteine = (sulfur carrier)-SH + L-alanine. In terms of biological role, catalyzes the removal of elemental sulfur atoms from cysteine to produce alanine. Seems to participate in the biosynthesis of the nitrogenase metalloclusters by providing the inorganic sulfur required for the Fe-S core formation. The chain is Cysteine desulfurase from Rhodobacter capsulatus (Rhodopseudomonas capsulata).